The sequence spans 340 residues: Ketol-acid reductoisomerase (NADP(+)) (340 aa).

One can recognise a KARI N-terminal Rossmann domain in the interval 1 to 183; it reads MAITVYYDKD…GGGRTGIIET (183 aa). NADP(+) contacts are provided by residues 26 to 29, R49, S52, S54, and 84 to 87; these read FGSQ and DEIQ. The active site involves H109. An NADP(+)-binding site is contributed by G135. The 146-residue stretch at 184–329 folds into the KARI C-terminal knotted domain; sequence TFKAETETDL…RNLRAMMPWI (146 aa). Residues D192, E196, E228, and E232 each coordinate Mg(2+). Residue S253 coordinates substrate.

It belongs to the ketol-acid reductoisomerase family. The cofactor is Mg(2+).

It carries out the reaction (2R)-2,3-dihydroxy-3-methylbutanoate + NADP(+) = (2S)-2-acetolactate + NADPH + H(+). The enzyme catalyses (2R,3R)-2,3-dihydroxy-3-methylpentanoate + NADP(+) = (S)-2-ethyl-2-hydroxy-3-oxobutanoate + NADPH + H(+). The protein operates within amino-acid biosynthesis; L-isoleucine biosynthesis; L-isoleucine from 2-oxobutanoate: step 2/4. Its pathway is amino-acid biosynthesis; L-valine biosynthesis; L-valine from pyruvate: step 2/4. Its function is as follows. Involved in the biosynthesis of branched-chain amino acids (BCAA). Catalyzes an alkyl-migration followed by a ketol-acid reduction of (S)-2-acetolactate (S2AL) to yield (R)-2,3-dihydroxy-isovalerate. In the isomerase reaction, S2AL is rearranged via a Mg-dependent methyl migration to produce 3-hydroxy-3-methyl-2-ketobutyrate (HMKB). In the reductase reaction, this 2-ketoacid undergoes a metal-dependent reduction by NADPH to yield (R)-2,3-dihydroxy-isovalerate. This Campylobacter jejuni subsp. doylei (strain ATCC BAA-1458 / RM4099 / 269.97) protein is Ketol-acid reductoisomerase (NADP(+)).